A 139-amino-acid polypeptide reads, in one-letter code: Small ribosomal subunit protein uS12 (139 aa).

Asp102 carries the 3-methylthioaspartic acid modification. Residues 116 to 139 (DTTGVAKRSQGRSKYGAKRPKKSK) are disordered. Positions 124 to 139 (SQGRSKYGAKRPKKSK) are enriched in basic residues.

Belongs to the universal ribosomal protein uS12 family. In terms of assembly, part of the 30S ribosomal subunit. Contacts proteins S8 and S17. May interact with IF1 in the 30S initiation complex.

Its function is as follows. With S4 and S5 plays an important role in translational accuracy. Functionally, interacts with and stabilizes bases of the 16S rRNA that are involved in tRNA selection in the A site and with the mRNA backbone. Located at the interface of the 30S and 50S subunits, it traverses the body of the 30S subunit contacting proteins on the other side and probably holding the rRNA structure together. The combined cluster of proteins S8, S12 and S17 appears to hold together the shoulder and platform of the 30S subunit. The chain is Small ribosomal subunit protein uS12 from Mesomycoplasma hyopneumoniae (strain 7448) (Mycoplasma hyopneumoniae).